We begin with the raw amino-acid sequence, 533 residues long: T-complex protein 1 subunit delta (533 aa).

Residues 1–24 (MVVKPAARGMKPQGQAYKDKSKPA) form a disordered region.

It belongs to the TCP-1 chaperonin family. As to quaternary structure, heterooligomeric complex of about 850 to 900 kDa that forms two stacked rings, 12 to 16 nm in diameter.

It localises to the cytoplasm. Molecular chaperone; assists the folding of proteins upon ATP hydrolysis. Known to play a role, in vitro, in the folding of actin and tubulin. This is T-complex protein 1 subunit delta from Ochlerotatus triseriatus (Eastern treehole mosquito).